Here is an 879-residue protein sequence, read N- to C-terminus: Oxysterol-binding protein-related protein 5 (879 aa).

The segment at 1-73 is disordered; that stretch reads MKEEAFLRRR…TPSSATKVPP (73 aa). Phosphoserine is present on S12. A coiled-coil region spans residues 93–123; sequence VTKKETLKAQKENYRQEKKRATRQLLSALTD. The 118-residue stretch at 126–243 folds into the PH domain; it reads VVIMADSLKI…WLDALELALR (118 aa). A disordered region spans residues 254 to 341; it reads KPGRDGEPGT…TPGAPVRRGT (88 aa). 2 stretches are compositionally biased toward basic and acidic residues: residues 300–309 and 316–325; these read FSDKSERENP and TQDHSRKTES. Residues 384-389, 446-449, and 478-479 contribute to the a 1,2-diacyl-sn-glycero-3-phospho-(1D-myo-inositol 4-phosphate) site; these read LSRVVL, KPYN, and HH. Residues 384-389 and N449 contribute to the a 1,2-diacyl-sn-glycero-3-phospho-L-serine site; that span reads LSRVVL. S504 provides a ligand contact to a 1,2-diacyl-sn-glycero-3-phospho-L-serine. Residues K670, E674, and R678 each coordinate a 1,2-diacyl-sn-glycero-3-phospho-(1D-myo-inositol 4-phosphate). The tract at residues 742-806 is disordered; the sequence is TTFLGSPGPR…FVPGGESPCP (65 aa). S747 carries the phosphoserine modification. Positions 750 to 765 are enriched in basic and acidic residues; sequence PRHERSGPDQRLRKAS. The span at 766-783 shows a compositional bias: polar residues; it reads DQPSGHSQATESSGSTPE. A helical transmembrane segment spans residues 860–878; it reads SWFLLCVFLACQLFINHIL.

It belongs to the OSBP family. As to expression, ubiquitously expressed.

Its subcellular location is the endoplasmic reticulum membrane. Lipid transporter involved in lipid countertransport between the endoplasmic reticulum and the plasma membrane: specifically exchanges phosphatidylserine with phosphatidylinositol 4-phosphate (PI4P), delivering phosphatidylserine to the plasma membrane in exchange for PI4P, which is degraded by the SAC1/SACM1L phosphatase in the endoplasmic reticulum. Binds phosphatidylserine and PI4P in a mutually exclusive manner. May cooperate with NPC1 to mediate the exit of cholesterol from endosomes/lysosomes. Binds 25-hydroxycholesterol and cholesterol. This chain is Oxysterol-binding protein-related protein 5 (OSBPL5), found in Homo sapiens (Human).